A 346-amino-acid polypeptide reads, in one-letter code: Holliday junction branch migration complex subunit RuvB (346 aa).

The segment at 1 to 182 (MKIELLNTPA…FGISSRFDYY (182 aa)) is large ATPase domain (RuvB-L). ATP is bound by residues Ile21, Arg22, Gly63, Lys66, Thr67, Thr68, 129–131 (EDF), Arg172, Tyr182, and Arg219. A Mg(2+)-binding site is contributed by Thr67. Positions 183–253 (PPELLERIIL…IAMTTLASLE (71 aa)) are small ATPAse domain (RuvB-S). A head domain (RuvB-H) region spans residues 256-346 (EEGLDDMDKK…GPLFDAAPAR (91 aa)). DNA-binding residues include Arg311 and Arg316.

This sequence belongs to the RuvB family. As to quaternary structure, homohexamer. Forms an RuvA(8)-RuvB(12)-Holliday junction (HJ) complex. HJ DNA is sandwiched between 2 RuvA tetramers; dsDNA enters through RuvA and exits via RuvB. An RuvB hexamer assembles on each DNA strand where it exits the tetramer. Each RuvB hexamer is contacted by two RuvA subunits (via domain III) on 2 adjacent RuvB subunits; this complex drives branch migration. In the full resolvosome a probable DNA-RuvA(4)-RuvB(12)-RuvC(2) complex forms which resolves the HJ.

The protein resides in the cytoplasm. It catalyses the reaction ATP + H2O = ADP + phosphate + H(+). Functionally, the RuvA-RuvB-RuvC complex processes Holliday junction (HJ) DNA during genetic recombination and DNA repair, while the RuvA-RuvB complex plays an important role in the rescue of blocked DNA replication forks via replication fork reversal (RFR). RuvA specifically binds to HJ cruciform DNA, conferring on it an open structure. The RuvB hexamer acts as an ATP-dependent pump, pulling dsDNA into and through the RuvAB complex. RuvB forms 2 homohexamers on either side of HJ DNA bound by 1 or 2 RuvA tetramers; 4 subunits per hexamer contact DNA at a time. Coordinated motions by a converter formed by DNA-disengaged RuvB subunits stimulates ATP hydrolysis and nucleotide exchange. Immobilization of the converter enables RuvB to convert the ATP-contained energy into a lever motion, pulling 2 nucleotides of DNA out of the RuvA tetramer per ATP hydrolyzed, thus driving DNA branch migration. The RuvB motors rotate together with the DNA substrate, which together with the progressing nucleotide cycle form the mechanistic basis for DNA recombination by continuous HJ branch migration. Branch migration allows RuvC to scan DNA until it finds its consensus sequence, where it cleaves and resolves cruciform DNA. This Chlorobium phaeobacteroides (strain DSM 266 / SMG 266 / 2430) protein is Holliday junction branch migration complex subunit RuvB.